Consider the following 198-residue polypeptide: MAALTAEHFAALQSLLKASSKDVVRQLCQESFSSSALGLKKLLDVTCSSLSVTQEEAEELLQALHRLTRLVAFRDLSSAEAILALFPENFHQNLKNLLTKIILEHVSTWRTEAQANQISLPRLVDLDWRVDIKTSSDSISRMAVPTCLLQMKIQEDPSLCGDKPSISAVTVELSKETLDTMLDGLGRIRDQLSAVASK.

An N-acetylalanine modification is found at Ala-2. Residues Arg-122–Ala-196 enclose the COMM domain.

It belongs to the COMM domain-containing protein 9 family. As to quaternary structure, component of the commander complex consisting of the CCC subcomplex and the retriever subcomplex. Component of the CCC (COMMD/CCDC22/CCDC93) subcomplex consisting of COMMD1, COMMD2, COMMD3, COMMD4, COMMD5, COMMD6, COMMD7, COMMD8, COMMD9, COMMD10, CCDC22 and CCDC93; within the complex forms a heterodimer with COMMD7. Interacts with RELB and NFKB1/p105. Interacts with CCDC22, CCDC93, SCNN1B, CUL1. Ubiquitous.

Its subcellular location is the nucleus. It is found in the cytoplasmic vesicle. Functionally, scaffold protein in the commander complex that is essential for endosomal recycling of transmembrane cargos; the commander complex is composed of the CCC subcomplex and the retriever subcomplex. May modulate activity of cullin-RING E3 ubiquitin ligase (CRL) complexes. May down-regulate activation of NF-kappa-B. Modulates Na(+) transport in epithelial cells by regulation of apical cell surface expression of amiloride-sensitive sodium channel (ENaC) subunits. The protein is COMM domain-containing protein 9 (COMMD9) of Homo sapiens (Human).